Consider the following 130-residue polypeptide: MVESIARVRHIRVTPQKARRVVDMIRGKQAEEALAILKFAPQGASEPIYKLVASAMANARVKADASNSFLAEQDLYIAKAFVDEGTTLKRFQPRAQGRAFRINKRTSHITVVLATPDEADVATTAKKASK.

Belongs to the universal ribosomal protein uL22 family. As to quaternary structure, part of the 50S ribosomal subunit.

In terms of biological role, this protein binds specifically to 23S rRNA; its binding is stimulated by other ribosomal proteins, e.g. L4, L17, and L20. It is important during the early stages of 50S assembly. It makes multiple contacts with different domains of the 23S rRNA in the assembled 50S subunit and ribosome. Its function is as follows. The globular domain of the protein is located near the polypeptide exit tunnel on the outside of the subunit, while an extended beta-hairpin is found that lines the wall of the exit tunnel in the center of the 70S ribosome. The protein is Large ribosomal subunit protein uL22 of Clavibacter sepedonicus (Clavibacter michiganensis subsp. sepedonicus).